Reading from the N-terminus, the 461-residue chain is Photosystem II CP43 reaction center protein (461 aa).

Positions 1 to 2 (ME) are excised as a propeptide. Residue threonine 3 is modified to N-acetylthreonine. Threonine 3 is subject to Phosphothreonine. The next 5 membrane-spanning stretches (helical) occupy residues 57 to 81 (LFEVAHFVPEKPMYEQGLILLPHLA), 122 to 143 (LIGPETLEESFPFFGYVWKDKN), 166 to 188 (KAMYFGGVYDTWAPGGGDVRVIT), 243 to 263 (KPFAWARRALVWSGEAYLSYS), and 279 to 300 (WFNNTAYPSEFYGPTGPEASQA). Glutamate 355 contributes to the [CaMn4O5] cluster binding site. A helical transmembrane segment spans residues 435 to 459 (RARAAAAGFEKGIERETEPALSMKP).

The protein belongs to the PsbB/PsbC family. PsbC subfamily. As to quaternary structure, PSII is composed of 1 copy each of membrane proteins PsbA, PsbB, PsbC, PsbD, PsbE, PsbF, PsbH, PsbI, PsbJ, PsbK, PsbL, PsbM, PsbT, PsbX, PsbY, PsbZ, Psb30/Ycf12, at least 3 peripheral proteins of the oxygen-evolving complex and a large number of cofactors. It forms dimeric complexes. The cofactor is Binds multiple chlorophylls and provides some of the ligands for the Ca-4Mn-5O cluster of the oxygen-evolving complex. It may also provide a ligand for a Cl- that is required for oxygen evolution. PSII binds additional chlorophylls, carotenoids and specific lipids..

It is found in the plastid. Its subcellular location is the chloroplast thylakoid membrane. In terms of biological role, one of the components of the core complex of photosystem II (PSII). It binds chlorophyll and helps catalyze the primary light-induced photochemical processes of PSII. PSII is a light-driven water:plastoquinone oxidoreductase, using light energy to abstract electrons from H(2)O, generating O(2) and a proton gradient subsequently used for ATP formation. This chain is Photosystem II CP43 reaction center protein, found in Chlorokybus atmophyticus (Soil alga).